Reading from the N-terminus, the 528-residue chain is Glucose-6-phosphate isomerase (528 aa).

Glu322 (proton donor) is an active-site residue. Active-site residues include His351 and Lys455.

Belongs to the GPI family.

The protein localises to the cytoplasm. It carries out the reaction alpha-D-glucose 6-phosphate = beta-D-fructose 6-phosphate. It functions in the pathway carbohydrate biosynthesis; gluconeogenesis. It participates in carbohydrate degradation; glycolysis; D-glyceraldehyde 3-phosphate and glycerone phosphate from D-glucose: step 2/4. Catalyzes the reversible isomerization of glucose-6-phosphate to fructose-6-phosphate. The protein is Glucose-6-phosphate isomerase of Trichormus variabilis (strain ATCC 29413 / PCC 7937) (Anabaena variabilis).